We begin with the raw amino-acid sequence, 737 residues long: Palmitoyltransferase akr1 (737 aa).

Residues methionine 1–lysine 60 form a disordered region. Residues methionine 1–lysine 314 lie on the Cytoplasmic side of the membrane. The segment covering proline 7–proline 38 has biased composition (low complexity). 5 ANK repeats span residues glutamate 97 to alanine 126, serine 131 to leucine 160, glutamine 164 to valine 193, glutamine 197 to alanine 226, and glycine 230 to alanine 259. Helical transmembrane passes span phenylalanine 315–valine 335 and valine 336–lysine 356. At alanine 357 to proline 372 the chain is on the cytoplasmic side. Residues phenylalanine 373–valine 393 traverse the membrane as a helical segment. Residues leucine 394–proline 402 are Lumenal-facing. A helical transmembrane segment spans residues phenylalanine 403–methionine 423. At valine 424–glutamine 500 the chain is on the cytoplasmic side. Residues asparagine 456–leucine 506 form the DHHC domain. The S-palmitoyl cysteine intermediate role is filled by cysteine 486. A helical transmembrane segment spans residues phenylalanine 501–asparagine 521. Over tyrosine 522–threonine 549 the chain is Lumenal. A helical membrane pass occupies residues phenylalanine 550–valine 570. Topologically, residues valine 571–valine 737 are cytoplasmic.

It belongs to the DHHC palmitoyltransferase family. AKR/ZDHHC17 subfamily.

Its subcellular location is the early endosome membrane. The protein resides in the golgi apparatus membrane. The enzyme catalyses L-cysteinyl-[protein] + hexadecanoyl-CoA = S-hexadecanoyl-L-cysteinyl-[protein] + CoA. Palmitoyltransferase specific for casein kinase 1. This chain is Palmitoyltransferase akr1 (akr1), found in Emericella nidulans (strain FGSC A4 / ATCC 38163 / CBS 112.46 / NRRL 194 / M139) (Aspergillus nidulans).